Consider the following 524-residue polypeptide: Casein kinase I homolog 3 (524 aa).

Residues 14 to 319 (YAVGPKIGEG…YLISLMDDAL (306 aa)) form the Protein kinase domain. Residues 20–28 (IGEGSFGVI) and Lys60 contribute to the ATP site. Asp150 (proton acceptor) is an active-site residue. 2 disordered regions span residues 352 to 414 (HGYG…KQQH) and 427 to 474 (PETH…EHNL). Over residues 360–373 (RVNGNTARNNVNTN) the composition is skewed to low complexity. 2 stretches are compositionally biased toward polar residues: residues 374–413 (SKTR…TKQQ) and 429–474 (THSN…EHNL). The short motif at 444 to 447 (YDSI) is the YXXZ targeting signal element. 7 S-palmitoyl cysteine lipidation sites follow: Cys517, Cys518, Cys519, Cys520, Cys522, Cys523, and Cys524.

This sequence belongs to the protein kinase superfamily. CK1 Ser/Thr protein kinase family. Casein kinase I subfamily.

It is found in the cell membrane. Its subcellular location is the nucleus membrane. The protein localises to the vacuole membrane. It catalyses the reaction L-seryl-[protein] + ATP = O-phospho-L-seryl-[protein] + ADP + H(+). The catalysed reaction is L-threonyl-[protein] + ATP = O-phospho-L-threonyl-[protein] + ADP + H(+). Functionally, casein kinases are operationally defined by their preferential utilization of acidic proteins such as caseins as substrates. Phosphorylates MON1, inhibiting the guanine nucleotide exchange factor activity of the MON1-CCZ1 complex, possibly by preventing its recruitment to membranes by small GTPase RAB5 homologs. This chain is Casein kinase I homolog 3 (YCK3), found in Saccharomyces cerevisiae (strain ATCC 204508 / S288c) (Baker's yeast).